A 291-amino-acid polypeptide reads, in one-letter code: Protein-export membrane protein SecF (291 aa).

6 helical membrane passes run 19–39 (LVVI…SWYV), 134–154 (LALG…FLMF), 156–176 (VFVP…ISVA), 187–209 (LGTV…LLNN), 226–246 (MRTG…MAAV), and 256–278 (AAIG…LLNL).

The protein belongs to the SecD/SecF family. SecF subfamily. As to quaternary structure, part of the protein translocation apparatus. Forms a complex with SecD.

It is found in the cell membrane. Its function is as follows. Involved in protein export. In Haloquadratum walsbyi (strain DSM 16790 / HBSQ001), this protein is Protein-export membrane protein SecF.